The primary structure comprises 327 residues: MPHLADLVVQAKADIERSQDIEALELVRVEYLGKKGHFTQQMTALRDLAPDARPAAGAVINQAKQDVQQALAERKATLEGAALEAWLAAETLDVSLPGRRMENGGLHPVSRTIARIEHFFGELGFSVATGPEIEDNYHNFDALNIPAHHPARADHDTFWFDATRLLRTQTSGVQIRTMKAQPPPIRIIAPGRVYRNDYDQTHTPMFHQMEGLIIDTDISFTNLKGTLHDFLRNFFEEDLQVRFRPSYFPFTEPSAEVDVMGKNGRWLEVLGCGMVHPNVLRNVGIDPEIYSGFAFGMGMERLTMLRYGVMDLRAFFENDLRFLKQFK.

Mg(2+) is bound at residue glutamate 252.

This sequence belongs to the class-II aminoacyl-tRNA synthetase family. Phe-tRNA synthetase alpha subunit type 1 subfamily. In terms of assembly, tetramer of two alpha and two beta subunits. Requires Mg(2+) as cofactor.

The protein localises to the cytoplasm. It carries out the reaction tRNA(Phe) + L-phenylalanine + ATP = L-phenylalanyl-tRNA(Phe) + AMP + diphosphate + H(+). The polypeptide is Phenylalanine--tRNA ligase alpha subunit (Sodalis glossinidius (strain morsitans)).